Reading from the N-terminus, the 394-residue chain is Mannosyl-3-phosphoglycerate synthase (394 aa).

Belongs to the glycosyltransferase 2 family.

The protein localises to the cytoplasm. It carries out the reaction (2R)-3-phosphoglycerate + GDP-alpha-D-mannose = 2-O-(alpha-D-mannosyl)-3-phosphoglycerate + GDP + H(+). It functions in the pathway carbohydrate biosynthesis; 2-(alpha-D-mannosyl)-D-glycerate biosynthesis; 2-(alpha-D-mannosyl)-D-glycerate from GDP-alpha-D-mannose (MPG route): step 1/2. In terms of biological role, transfers a mannosyl group from GDP-mannose to phosphoglycerate to form mannosyl-3-phosphoglycerate (MPG). This Pyrococcus furiosus (strain ATCC 43587 / DSM 3638 / JCM 8422 / Vc1) protein is Mannosyl-3-phosphoglycerate synthase (mngA).